Consider the following 247-residue polypeptide: Protein NipSnap homolog 3A (247 aa).

Residues Lys48 and Lys166 each carry the N6-acetyllysine modification.

It belongs to the NipSnap family. As to quaternary structure, interacts with the Salmonella typhimurium virulence protein spiC. Ubiquitous. Highly expressed in liver, kidney and muscle. Expressed at intermediate level in brain, heart, colon, thymus, kidney, small intestine, placenta, lung, leukocytes and spleen.

It localises to the cytoplasm. It is found in the cytosol. The polypeptide is Protein NipSnap homolog 3A (NIPSNAP3A) (Homo sapiens (Human)).